The primary structure comprises 325 residues: Ribosomal RNA small subunit methyltransferase H (325 aa).

S-adenosyl-L-methionine-binding positions include 38–40, D55, F82, D103, and Q110; that span reads GGY. Disordered stretches follow at residues 256–275 and 281–307; these read SGGDAAGSRHRPAPTAAARA and PARKVRPGKAEEARNPRARSATLRSAV.

This sequence belongs to the methyltransferase superfamily. RsmH family.

It is found in the cytoplasm. The catalysed reaction is cytidine(1402) in 16S rRNA + S-adenosyl-L-methionine = N(4)-methylcytidine(1402) in 16S rRNA + S-adenosyl-L-homocysteine + H(+). In terms of biological role, specifically methylates the N4 position of cytidine in position 1402 (C1402) of 16S rRNA. The protein is Ribosomal RNA small subunit methyltransferase H of Sphingopyxis alaskensis (strain DSM 13593 / LMG 18877 / RB2256) (Sphingomonas alaskensis).